The chain runs to 1002 residues: Carboxypeptidase Y (1002 aa).

Residues 1-18 (MLMKQTFLYFLLTCVVSA) form the signal peptide. The propeptide occupies 19–521 (QFNGYVPPEQ…AYLEMLKAEG (503 aa)). Disordered regions lie at residues 51-91 (QEES…TALE), 124-436 (DEDE…NMQS), and 527-546 (AFRD…ADSS). Composition is skewed to basic and acidic residues over residues 63-81 (PERD…HEFN) and 127-143 (EHVR…EDAP). Residues 144 to 170 (RRKHGKCKGKGKHHKGKHAKGKGKKSH) show a composition bias toward basic residues. A compositionally biased stretch (basic and acidic residues) spans 171 to 205 (PKPEDDSVFFDDERPKHHEFDDEDREFPAHHEPGE). 15 tandem repeats follow at residues 225-237 (MHHE…PPPP), 238-250 (MHHE…PPPP), 251-263 (MHHE…PPPP), 264-276 (MHHE…PPPP), 277-289 (MHHE…PPPP), 290-302 (MHHE…PPPP), 303-315 (MHHE…PPPP), 316-328 (MHHE…PPPP), 329-341 (MHHE…PPPP), 361-369 (DKEHHKGPK), 370-378 (DKEHHKGPK), 379-387 (DKEHHKGPK), 388-396 (DKEHHKGPK), 397-405 (DKEHHKGPK), and 406-414 (DKEHHKGPK). Residues 225-341 (MHHEPGEHMP…EPGEHMPPPP (117 aa)) form a 9 X 13 AA tandem repeats of M-H-H-E-P-G-E-H-M-P-P-P-P region. The segment covering 343–431 (KHHELEEHEG…PKEKHNERPE (89 aa)) has biased composition (basic and acidic residues). The tract at residues 361–423 (DKEHHKGPKD…KDKEHHQGPK (63 aa)) is 7 X 9 AA tandem repeats of D-K-E-H-H-K-G-P-K. Residues 415-423 (DKEHHQGPK) form a 2-7; approximate repeat. Cystine bridges form between Cys-627-Cys-880, Cys-776-Cys-789, Cys-799-Cys-822, Cys-806-Cys-815, and Cys-844-Cys-851. Asn-659 carries N-linked (GlcNAc...) asparagine glycosylation. Residue Ser-715 is part of the active site. The active site involves Asp-921. Cys-924 provides a ligand contact to substrate. Residue His-978 is part of the active site. Residue Met-979 coordinates substrate.

Belongs to the peptidase S10 family. Heterodimer of two subunits of 32 kDa and 19 kDa derived from the precursor protein and linked by a disulfide bond.

Its subcellular location is the vacuole. The enzyme catalyses Release of a C-terminal amino acid with broad specificity.. Its function is as follows. Involved in degradation of small peptides. Digests preferentially peptides containing an aliphatic or hydrophobic residue in P1' position, as well as methionine, leucine or phenylalanine in P1 position of ester substrate. The polypeptide is Carboxypeptidase Y (cpy1) (Schizosaccharomyces pombe (strain 972 / ATCC 24843) (Fission yeast)).